Consider the following 474-residue polypeptide: Transmembrane transporter FVEG_12640 (474 aa).

A compositionally biased stretch (polar residues) spans 1 to 15 (MASPTISSMEQYTPS). Positions 1 to 39 (MASPTISSMEQYTPSSKDEKIVPLHGDAAGSDTEKGESR) are disordered. Helical transmembrane passes span 72–92 (ILAI…LCIV), 133–153 (LVGV…IVTS), 164–184 (GTCT…FSSI), 192–212 (WLTW…VVAV), 231–251 (WAPI…NIFI), 275–295 (ACLV…LVIY), 317–337 (VAYG…QHVA), 364–384 (LGIN…VPIL), 387–407 (LLGL…PALL), and 431–451 (LIMI…AVLI).

This sequence belongs to the amino acid/polyamine transporter 2 family.

The protein resides in the membrane. Transmembrane transporter; part of the Fusarium detoxification of benzoxazolinone cluster 2 (FDB2) involved in the degradation of benzoxazolinones produced by the host plant. Maize, wheat, and rye produce the 2 benzoxazinone phytoanticipins 2,4-dihy-droxy-7-methoxy-1,4-benzoxazin-3-one (DIMBOA) and 2,4-dihydroxy-1,4-benzoxazin-3-one (DIBOA) that, due to their inherent instability once released, spontaneously degrade to the more stable corresponding benzoxazolinones, 6-methoxy-2-benzoxazolinone (MBOA) and 2-benzoxazolinone (BOA), respectively. Might be involved in the transport of metabolites of benzoxazolinone degradation. The polypeptide is Transmembrane transporter FVEG_12640 (Gibberella moniliformis (strain M3125 / FGSC 7600) (Maize ear and stalk rot fungus)).